A 199-amino-acid chain; its full sequence is Proteasome subunit beta 2 (199 aa).

Positions 1 to 6 are cleaved as a propeptide — removed in mature form; by autocatalysis; the sequence is MEKKTG. Thr7 (nucleophile) is an active-site residue.

It belongs to the peptidase T1B family. In terms of assembly, the 20S proteasome core is composed of 14 alpha and 14 beta subunits that assemble into four stacked heptameric rings, resulting in a barrel-shaped structure. The two inner rings, each composed of seven catalytic beta subunits, are sandwiched by two outer rings, each composed of seven alpha subunits. The catalytic chamber with the active sites is on the inside of the barrel. Has a gated structure, the ends of the cylinder being occluded by the N-termini of the alpha-subunits. Is capped at one or both ends by the proteasome regulatory ATPase, PAN.

It localises to the cytoplasm. It carries out the reaction Cleavage of peptide bonds with very broad specificity.. The formation of the proteasomal ATPase PAN-20S proteasome complex, via the docking of the C-termini of PAN into the intersubunit pockets in the alpha-rings, triggers opening of the gate for substrate entry. Interconversion between the open-gate and close-gate conformations leads to a dynamic regulation of the 20S proteasome proteolysis activity. Functionally, component of the proteasome core, a large protease complex with broad specificity involved in protein degradation. The polypeptide is Proteasome subunit beta 2 (Thermococcus kodakarensis (strain ATCC BAA-918 / JCM 12380 / KOD1) (Pyrococcus kodakaraensis (strain KOD1))).